The primary structure comprises 924 residues: 104 kDa microneme/rhoptry antigen (924 aa).

A signal peptide spans 1–19 (MKFLILLFNILCLFPVLAA). The segment at 490–907 (SKKKLAPITE…KKPKKPDSAY (418 aa)) is disordered. Composition is skewed to basic and acidic residues over residues 522–532 (PGDKEGSEGHK) and 573–588 (GPKD…EPRK). Low complexity predominate over residues 592–617 (PRTASPTRRPSPKLPQLSKLPKSTSP). A compositionally biased stretch (basic and acidic residues) spans 653–673 (SFKEKFYDDYSKAASRSKETK). Over residues 724–736 (SPSTSPSEFFTPP) the composition is skewed to low complexity. Basic and acidic residues-rich tracts occupy residues 737-747 (ESKRTRFHETP), 770-783 (KSPD…RSPS), and 816-825 (DPGRMAKDAS). Residues 857 to 867 (DDEGTEADDEE) are compositionally biased toward acidic residues. Basic and acidic residues predominate over residues 868–878 (THPPEERQKTE). Positions 879–901 (VRRRRPPKKPSKSPRPSKPKKPK) are enriched in basic residues. D904 is lipidated: GPI-anchor amidated aspartate. A propeptide spans 905-924 (SAYIPSILAILVVSLIVGIL) (removed in mature form).

It localises to the cell membrane. This Theileria parva (East coast fever infection agent) protein is 104 kDa microneme/rhoptry antigen.